The sequence spans 265 residues: Orotidine 5'-phosphate decarboxylase (265 aa).

Substrate is bound by residues D37, 59-61, 91-100, Y217, and R235; these read KTH and DRKFADIGNT. Residue K93 is the Proton donor of the active site.

This sequence belongs to the OMP decarboxylase family.

It carries out the reaction orotidine 5'-phosphate + H(+) = UMP + CO2. It participates in pyrimidine metabolism; UMP biosynthesis via de novo pathway; UMP from orotate: step 2/2. The chain is Orotidine 5'-phosphate decarboxylase (URA3) from Candida glabrata (strain ATCC 2001 / BCRC 20586 / JCM 3761 / NBRC 0622 / NRRL Y-65 / CBS 138) (Yeast).